Here is a 205-residue protein sequence, read N- to C-terminus: Small ribosomal subunit protein uS4 (205 aa).

One can recognise an S4 RNA-binding domain in the interval 91-149; sequence MRLDALVLRAAFARSISQARQLVVHRHILVDGKLVDRPSYSVSPGQTVKVKPKSVPLDP.

This sequence belongs to the universal ribosomal protein uS4 family. In terms of assembly, part of the 30S ribosomal subunit. Contacts protein S5. The interaction surface between S4 and S5 is involved in control of translational fidelity.

Its function is as follows. One of the primary rRNA binding proteins, it binds directly to 16S rRNA where it nucleates assembly of the body of the 30S subunit. With S5 and S12 plays an important role in translational accuracy. This chain is Small ribosomal subunit protein uS4, found in Tropheryma whipplei (strain TW08/27) (Whipple's bacillus).